Reading from the N-terminus, the 322-residue chain is MLNSFKLSLQYILPKLWLTRLAGWGARKRAGWLTKLVIDLFVKYYKVDMKEAQKPDTASYRTFNDFFVRPLRDDVRPVNTDPNVLVMPADGVISQSGKIEEDKILQAKGHNYSLEALLAGNYLMADLFRNGSFVTTYLSPRDYHRVHMPCNGILREMIYVPGDLFSVNHLTAQNVPNLFARNERVICLFDTEFGPMAQILVGATIVGSIETVWAGTITPPREGVIKRWTWPEGESEGSVALLKGQEMGRFKLGSTVINLFAPGKVTLAEQLQSLSVTKIGQPLAVSTELFVTPEAEPAPLPEEEINAEHDASPLVDDKKDES.

Catalysis depends on charge relay system; for autoendoproteolytic cleavage activity residues aspartate 90, histidine 147, and serine 254. Serine 254 acts as the Schiff-base intermediate with substrate; via pyruvic acid; for decarboxylase activity in catalysis. Residue serine 254 is modified to Pyruvic acid (Ser); by autocatalysis. A disordered region spans residues 294–322 (EAEPAPLPEEEINAEHDASPLVDDKKDES). Positions 306–322 (NAEHDASPLVDDKKDES) are enriched in basic and acidic residues.

This sequence belongs to the phosphatidylserine decarboxylase family. PSD-B subfamily. Prokaryotic type I sub-subfamily. Heterodimer of a large membrane-associated beta subunit and a small pyruvoyl-containing alpha subunit. The cofactor is pyruvate. Is synthesized initially as an inactive proenzyme. Formation of the active enzyme involves a self-maturation process in which the active site pyruvoyl group is generated from an internal serine residue via an autocatalytic post-translational modification. Two non-identical subunits are generated from the proenzyme in this reaction, and the pyruvate is formed at the N-terminus of the alpha chain, which is derived from the carboxyl end of the proenzyme. The autoendoproteolytic cleavage occurs by a canonical serine protease mechanism, in which the side chain hydroxyl group of the serine supplies its oxygen atom to form the C-terminus of the beta chain, while the remainder of the serine residue undergoes an oxidative deamination to produce ammonia and the pyruvoyl prosthetic group on the alpha chain. During this reaction, the Ser that is part of the protease active site of the proenzyme becomes the pyruvoyl prosthetic group, which constitutes an essential element of the active site of the mature decarboxylase.

The protein localises to the cell membrane. The enzyme catalyses a 1,2-diacyl-sn-glycero-3-phospho-L-serine + H(+) = a 1,2-diacyl-sn-glycero-3-phosphoethanolamine + CO2. It participates in phospholipid metabolism; phosphatidylethanolamine biosynthesis; phosphatidylethanolamine from CDP-diacylglycerol: step 2/2. Functionally, catalyzes the formation of phosphatidylethanolamine (PtdEtn) from phosphatidylserine (PtdSer). In Citrobacter koseri (strain ATCC BAA-895 / CDC 4225-83 / SGSC4696), this protein is Phosphatidylserine decarboxylase proenzyme.